Consider the following 331-residue polypeptide: Pantothenate kinase (331 aa).

109-116 (GSVAVGKS) contributes to the ATP binding site.

Belongs to the prokaryotic pantothenate kinase family.

The protein resides in the cytoplasm. It catalyses the reaction (R)-pantothenate + ATP = (R)-4'-phosphopantothenate + ADP + H(+). It functions in the pathway cofactor biosynthesis; coenzyme A biosynthesis; CoA from (R)-pantothenate: step 1/5. This is Pantothenate kinase from Rhizobium etli (strain CIAT 652).